Reading from the N-terminus, the 307-residue chain is Methionyl-tRNA formyltransferase (307 aa).

108–111 (SLLP) lines the (6S)-5,6,7,8-tetrahydrofolate pocket.

It belongs to the Fmt family.

It carries out the reaction L-methionyl-tRNA(fMet) + (6R)-10-formyltetrahydrofolate = N-formyl-L-methionyl-tRNA(fMet) + (6S)-5,6,7,8-tetrahydrofolate + H(+). Attaches a formyl group to the free amino group of methionyl-tRNA(fMet). The formyl group appears to play a dual role in the initiator identity of N-formylmethionyl-tRNA by promoting its recognition by IF2 and preventing the misappropriation of this tRNA by the elongation apparatus. In Renibacterium salmoninarum (strain ATCC 33209 / DSM 20767 / JCM 11484 / NBRC 15589 / NCIMB 2235), this protein is Methionyl-tRNA formyltransferase.